The sequence spans 287 residues: uncharacterized protein (287 aa).

This is an uncharacterized protein from Archaeoglobus fulgidus (strain ATCC 49558 / DSM 4304 / JCM 9628 / NBRC 100126 / VC-16).